The following is a 718-amino-acid chain: uncharacterized protein (718 aa).

6 helical membrane-spanning segments follow: residues valine 9–phenylalanine 29, asparagine 60–glycine 80, isoleucine 83–glycine 103, valine 136–phenylalanine 156, isoleucine 391–isoleucine 411, and leucine 506–aspartate 526.

The protein belongs to the YccS/YhfK family.

Its subcellular location is the cell membrane. This is an uncharacterized protein from Haemophilus influenzae (strain ATCC 51907 / DSM 11121 / KW20 / Rd).